The sequence spans 171 residues: S-ribosylhomocysteine lyase (171 aa).

His54, His58, and Cys128 together coordinate Fe cation.

It belongs to the LuxS family. In terms of assembly, homodimer. It depends on Fe cation as a cofactor.

The enzyme catalyses S-(5-deoxy-D-ribos-5-yl)-L-homocysteine = (S)-4,5-dihydroxypentane-2,3-dione + L-homocysteine. Functionally, involved in the synthesis of autoinducer 2 (AI-2) which is secreted by bacteria and is used to communicate both the cell density and the metabolic potential of the environment. The regulation of gene expression in response to changes in cell density is called quorum sensing. Catalyzes the transformation of S-ribosylhomocysteine (RHC) to homocysteine (HC) and 4,5-dihydroxy-2,3-pentadione (DPD). The sequence is that of S-ribosylhomocysteine lyase from Escherichia coli O157:H7.